A 537-amino-acid chain; its full sequence is MPAPTQLFFPLIRNCELSRIYGTACYCHHKHLCCSSSYIPQSRLRYTPHPAYATFCRPKENWWQYTQGRRYASTPQKFYLTPPQVNSILKANEYSFKVPEFDGKNVSSILGFDSNQLPANAPIEDRRSAATCLQTRGMLLGVFDGHAGCACSQAVSERLFYYIAVSLLPHETLLEIENAVESGRALLPILQWHKHPNDYFSKEASKLYFNSLRTYWQELIDLNTGESTDIDVKEALINAFKRLDNDISLEAQVGDPNSFLNYLVLRVAFSGATACVAHVDGVDLHVANTGDSRAMLGVQEEDGSWSAVTLSNDHNAQNERELERLKLEHPKSEAKSVVKQDRLLGLLMPFRAFGDVKFKWSIDLQKRVIESGPDQLNDNEYTKFIPPNYHTPPYLTAEPEVTYHRLRPQDKFLVLATDGLWETMHRQDVVRIVGEYLTGMHHQQPIAVGGYKVTLGQMHGLLTERRTKMSSVFEDQNAATHLIRHAVGNNEFGTVDHERLSKMLSLPEELARMYRDDITIIVVQFNSHVVGAYQNQE.

The transit peptide at Met-1–Tyr-71 directs the protein to the mitochondrion. The PPM-type phosphatase domain maps to Ile-109–Phe-525. 2 residues coordinate Mn(2+): Asp-144 and Gly-145. Lys-202 carries the N6-acetyllysine modification. Mn(2+)-binding residues include Asp-418 and Asp-516.

The protein belongs to the PP2C family. Heterodimer of a catalytic (PDP1) and a regulatory (PDPR) subunit. Requires Mn(2+) as cofactor. Mg(2+) is required as a cofactor.

The protein localises to the mitochondrion. It catalyses the reaction O-phospho-L-seryl-[pyruvate dehydrogenase E1 alpha subunit] + H2O = L-seryl-[pyruvate dehydrogenase E1 alpha subunit] + phosphate. Magnesium-dependent and calcium-stimulated. PDP1 activity strongly depends on its Ca(2+)-dependent binding to the lipoyl domain of E2 subunit of component of the pyruvate dehydrogenase complex. Functionally, mitochondrial enzyme that catalyzes the dephosphorylation and concomitant reactivation of the alpha subunit of the E1 component of the pyruvate dehydrogenase complex (PDC), thereby stimulating the conversion of pyruvate into acetyl-CoA. This chain is [Pyruvate dehydrogenase [acetyl-transferring]]-phosphatase 1, mitochondrial, found in Homo sapiens (Human).